The sequence spans 199 residues: Recombination protein RecR (199 aa).

The C4-type zinc finger occupies 58–73 (CQTCRILSETDLCSLC). Residues 81–176 (GQLCVVEMPS…TTTRIAHGVP (96 aa)) form the Toprim domain.

Belongs to the RecR family.

Functionally, may play a role in DNA repair. It seems to be involved in an RecBC-independent recombinational process of DNA repair. It may act with RecF and RecO. The chain is Recombination protein RecR from Nitrosococcus oceani (strain ATCC 19707 / BCRC 17464 / JCM 30415 / NCIMB 11848 / C-107).